A 349-amino-acid chain; its full sequence is Ribosomal RNA small subunit methyltransferase H (349 aa).

S-adenosyl-L-methionine-binding positions include 34–36 (GGH), aspartate 54, phenylalanine 81, aspartate 102, and glutamine 109. The disordered stretch occupies residues 328–349 (SRTGSVQHGQAKHKGVVQRGGS).

Belongs to the methyltransferase superfamily. RsmH family.

Its subcellular location is the cytoplasm. The catalysed reaction is cytidine(1402) in 16S rRNA + S-adenosyl-L-methionine = N(4)-methylcytidine(1402) in 16S rRNA + S-adenosyl-L-homocysteine + H(+). Specifically methylates the N4 position of cytidine in position 1402 (C1402) of 16S rRNA. The polypeptide is Ribosomal RNA small subunit methyltransferase H (Dehalococcoides mccartyi (strain ATCC BAA-2100 / JCM 16839 / KCTC 5957 / BAV1)).